The primary structure comprises 304 residues: MDKTIPGSFNSRTLIPNLLIIISGLVGLIGNAMVFWLLGFRLARNAFSVYILNLALADFLFLLCHIIDSTLLLLKFSYPNIIFLPCFNTVMMVPYIAGLSMLSAISTERCLSVVCPIWYRCRRPKHTSTVMCSAIWVLSLLICILNRYFCGFLDTKYEKDNRCLASNFFTAACLIFLFVVLCLSSLALLVRLFCGAGRMKLTRLYATIMLTVLVFLLCGLPFGIHWFLLIWIKIDYGKFAYGLYLAALVLTAVNSCANPIIYFFVGSFRHQKHQTLKMVLQRALQDTPETAENTVEMSSSKVEP.

The Extracellular segment spans residues 1 to 17; that stretch reads MDKTIPGSFNSRTLIPN. A helical transmembrane segment spans residues 18-38; sequence LLIIISGLVGLIGNAMVFWLL. At 39-46 the chain is on the cytoplasmic side; sequence GFRLARNA. The chain crosses the membrane as a helical span at residues 47–67; that stretch reads FSVYILNLALADFLFLLCHII. Topologically, residues 68–80 are extracellular; that stretch reads DSTLLLLKFSYPN. A helical membrane pass occupies residues 81 to 101; sequence IIFLPCFNTVMMVPYIAGLSM. The Cytoplasmic segment spans residues 102-132; it reads LSAISTERCLSVVCPIWYRCRRPKHTSTVMC. Residues 133 to 153 form a helical membrane-spanning segment; sequence SAIWVLSLLICILNRYFCGFL. Over 154-167 the chain is Extracellular; it reads DTKYEKDNRCLASN. A helical membrane pass occupies residues 168–188; the sequence is FFTAACLIFLFVVLCLSSLAL. The Cytoplasmic portion of the chain corresponds to 189 to 211; that stretch reads LVRLFCGAGRMKLTRLYATIMLT. A helical membrane pass occupies residues 212-232; that stretch reads VLVFLLCGLPFGIHWFLLIWI. At 233 to 244 the chain is on the extracellular side; sequence KIDYGKFAYGLY. A helical transmembrane segment spans residues 245–265; it reads LAALVLTAVNSCANPIIYFFV. Residues 266-304 lie on the Cytoplasmic side of the membrane; sequence GSFRHQKHQTLKMVLQRALQDTPETAENTVEMSSSKVEP.

It belongs to the G-protein coupled receptor 1 family. Mas subfamily. Expressed in a subset of IB4-positive small diameter nociceptive dorsal root neurons.

Its subcellular location is the cell membrane. Functionally, orphan receptor activated by a subset of RFamide-family neuropeptides such as FLRF-amide and FMRF-amide. Mediates its action by association with G proteins that activate a phosphatidylinositol-calcium second messenger system. Its effect is mediated by G(q) and G(11) proteins. May regulate the function of nociceptive neurons by modulation of pain perception. The sequence is that of Mas-related G-protein coupled receptor member A (Mrgpra) from Rattus norvegicus (Rat).